The following is a 249-amino-acid chain: MDMDKRIHLELRNRTPSDVKELVLDNCRSNEGKIEGLTDEFEELEFLSTINVGLTSVANLPKLNKLKKLELSDNRISGGLEVLAEKCPNLTHLNLSGNKIKDLSTIEPLKKLENLKSLDLFNCEVTNLNDYRENVFKLLPQLTYLDGYDRDDKEAPDSDAEGYVEGLDDDEEDEDEEEYDEDAQVVEDEEDEEEEEEGEEEDVSGEEEEDEEGYNDGEVDDEEDEEELGEEERGQKRKREPEDEGEDDD.

Threonine 15 is subject to Phosphothreonine. Serine 17 is subject to Phosphoserine. LRR repeat units lie at residues 18–38, 43–64, 65–87, and 89–110; these read DVKE…EGLT, ELEF…PKLN, KLKK…AEKC, and NLTH…EPLK. Residues 123-161 enclose the LRRCT domain; that stretch reads CEVTNLNDYRENVFKLLPQLTYLDGYDRDDKEAPDSDAE. The segment covering 147-156 has biased composition (basic and acidic residues); it reads GYDRDDKEAP. Positions 147–249 are disordered; it reads GYDRDDKEAP…EPEDEGEDDD (103 aa). The segment at 150–174 is necessary for tumor-suppressive function; it reads RDDKEAPDSDAEGYVEGLDDDEEDE. Residues 157-230 are compositionally biased toward acidic residues; it reads DSDAEGYVEG…DEEDEEELGE (74 aa). 2 positions are modified to phosphoserine: serine 158 and serine 204. Residues 165–249 form an interaction with E4F1 region; it reads EGLDDDEEDE…EPEDEGEDDD (85 aa).

This sequence belongs to the ANP32 family. Component of the SET complex, composed of at least ANP32A, APEX1, HMGB2, NME1, SET and TREX1. Directly interacts with SET. Interacts with ATXN1/SCA1. Interacts with MAP1B. Interacts with ELAVL1. Part of the INHAT (inhibitor of histone acetyltransferases) complex. Interacts with E4F1. The N-terminus is blocked. In terms of processing, phosphorylated on serine residues, at least in part by casein kinase 2/CK2. Post-translationally, some glutamate residues are glycylated by TTLL8. This modification occurs exclusively on glutamate residues and results in a glycine chain on the gamma-carboxyl group. As to expression, widely distributed in the central nervous system, with an abundant expression in the cerebellum.

It localises to the nucleus. The protein resides in the cytoplasm. Its subcellular location is the endoplasmic reticulum. Multifunctional protein that is involved in the regulation of many processes including tumor suppression, apoptosis, cell cycle progression or transcription. Promotes apoptosis by favouring the activation of caspase-9/CASP9 and allowing apoptosome formation. In addition, plays a role in the modulation of histone acetylation and transcription as part of the INHAT (inhibitor of histone acetyltransferases) complex. Inhibits the histone-acetyltranferase activity of EP300/CREBBP (CREB-binding protein) and EP300/CREBBP-associated factor by histone masking. Preferentially binds to unmodified histone H3 and sterically inhibiting its acetylation and phosphorylation leading to cell growth inhibition. Participates in other biochemical processes such as regulation of mRNA nuclear-to-cytoplasmic translocation and stability by its association with ELAVL1 (Hu-antigen R). Plays a role in E4F1-mediated transcriptional repression as well as inhibition of protein phosphatase 2A. This is Acidic leucine-rich nuclear phosphoprotein 32 family member A (ANP32A) from Bos taurus (Bovine).